The following is a 1112-amino-acid chain: Phytochrome E (1112 aa).

The disordered stretch occupies residues 1-20; that stretch reads MGFESSSSAASNMKPQPQKS. Residues 217 to 387 enclose the GAF domain; the sequence is DIGALCDTVV…AFGLQLQMEL (171 aa). Cysteine 322 is a binding site for phytochromobilin. PAS domains are found at residues 595 to 666 and 732 to 803; these read FVCE…LQGE and DYKT…LISL. Positions 877–1096 constitute a Histidine kinase domain; that stretch reads YVRQEIKNPL…FFQVDLQVKT (220 aa).

The protein belongs to the phytochrome family. As to quaternary structure, homodimer. Post-translationally, contains one covalently linked phytochromobilin chromophore.

Regulatory photoreceptor which exists in two forms that are reversibly interconvertible by light: the Pr form that absorbs maximally in the red region of the spectrum and the Pfr form that absorbs maximally in the far-red region. Photoconversion of Pr to Pfr induces an array of morphogenic responses, whereas reconversion of Pfr to Pr cancels the induction of those responses. Pfr controls the expression of a number of nuclear genes including those encoding the small subunit of ribulose-bisphosphate carboxylase, chlorophyll A/B binding protein, protochlorophyllide reductase, rRNA, etc. It also controls the expression of its own gene(s) in a negative feedback fashion. The sequence is that of Phytochrome E (PHYE) from Arabidopsis thaliana (Mouse-ear cress).